A 230-amino-acid polypeptide reads, in one-letter code: 7-cyano-7-deazaguanine synthase (230 aa).

Residue 16–26 (LSGGLDSMVSG) participates in ATP binding. The Zn(2+) site is built by C195, C205, C208, and C211.

It belongs to the QueC family. Zn(2+) is required as a cofactor.

The catalysed reaction is 7-carboxy-7-deazaguanine + NH4(+) + ATP = 7-cyano-7-deazaguanine + ADP + phosphate + H2O + H(+). The protein operates within purine metabolism; 7-cyano-7-deazaguanine biosynthesis. Catalyzes the ATP-dependent conversion of 7-carboxy-7-deazaguanine (CDG) to 7-cyano-7-deazaguanine (preQ(0)). This is 7-cyano-7-deazaguanine synthase from Rhizorhabdus wittichii (strain DSM 6014 / CCUG 31198 / JCM 15750 / NBRC 105917 / EY 4224 / RW1) (Sphingomonas wittichii).